A 231-amino-acid chain; its full sequence is Large ribosomal subunit protein uL1 (231 aa).

Belongs to the universal ribosomal protein uL1 family. As to quaternary structure, part of the 50S ribosomal subunit.

In terms of biological role, binds directly to 23S rRNA. The L1 stalk is quite mobile in the ribosome, and is involved in E site tRNA release. Protein L1 is also a translational repressor protein, it controls the translation of the L11 operon by binding to its mRNA. This Neisseria gonorrhoeae (strain ATCC 700825 / FA 1090) protein is Large ribosomal subunit protein uL1.